Reading from the N-terminus, the 226-residue chain is ATP synthase F(0) complex subunit a (226 aa).

6 helical membrane passes run 12–32, 68–88, 97–117, 138–158, 164–184, and 200–222; these read PTMMGLPIVILIIMFPSILFP, WALMLMSLILFIGSTNLLGLL, QLSMNLGMAIPLWAGTVITGF, IPMLVVIETISLFIQPMALAV, ITAGHLLMHLIGGAALALMNI, and TILEFAVALIQAYVFTLLVSLYL.

Belongs to the ATPase A chain family. As to quaternary structure, component of the ATP synthase complex composed at least of ATP5F1A/subunit alpha, ATP5F1B/subunit beta, ATP5MC1/subunit c (homooctomer), MT-ATP6/subunit a, MT-ATP8/subunit 8, ATP5ME/subunit e, ATP5MF/subunit f, ATP5MG/subunit g, ATP5MK/subunit k, ATP5MJ/subunit j, ATP5F1C/subunit gamma, ATP5F1D/subunit delta, ATP5F1E/subunit epsilon, ATP5PF/subunit F6, ATP5PB/subunit b, ATP5PD/subunit d, ATP5PO/subunit OSCP. ATP synthase complex consists of a soluble F(1) head domain (subunits alpha(3) and beta(3)) - the catalytic core - and a membrane F(0) domain - the membrane proton channel (subunits c, a, 8, e, f, g, k and j). These two domains are linked by a central stalk (subunits gamma, delta, and epsilon) rotating inside the F1 region and a stationary peripheral stalk (subunits F6, b, d, and OSCP). Interacts with DNAJC30; interaction is direct.

Its subcellular location is the mitochondrion inner membrane. The enzyme catalyses H(+)(in) = H(+)(out). In terms of biological role, subunit a, of the mitochondrial membrane ATP synthase complex (F(1)F(0) ATP synthase or Complex V) that produces ATP from ADP in the presence of a proton gradient across the membrane which is generated by electron transport complexes of the respiratory chain. ATP synthase complex consist of a soluble F(1) head domain - the catalytic core - and a membrane F(1) domain - the membrane proton channel. These two domains are linked by a central stalk rotating inside the F(1) region and a stationary peripheral stalk. During catalysis, ATP synthesis in the catalytic domain of F(1) is coupled via a rotary mechanism of the central stalk subunits to proton translocation. With the subunit c (ATP5MC1), forms the proton-conducting channel in the F(0) domain, that contains two crucial half-channels (inlet and outlet) that facilitate proton movement from the mitochondrial intermembrane space (IMS) into the matrix. Protons are taken up via the inlet half-channel and released through the outlet half-channel, following a Grotthuss mechanism. This is ATP synthase F(0) complex subunit a from Felis catus (Cat).